Reading from the N-terminus, the 154-residue chain is Myoglobin (154 aa).

The region spanning 2–148 is the Globin domain; the sequence is GLSDDEWHHV…FRNDMASKYK (147 aa). His-65 is a binding site for nitrite. Residue His-65 participates in O2 binding. Residue His-94 coordinates heme b.

It belongs to the globin family. As to quaternary structure, monomeric.

Its subcellular location is the cytoplasm. It localises to the sarcoplasm. It catalyses the reaction Fe(III)-heme b-[protein] + nitric oxide + H2O = Fe(II)-heme b-[protein] + nitrite + 2 H(+). The enzyme catalyses H2O2 + AH2 = A + 2 H2O. In terms of biological role, monomeric heme protein which primary function is to store oxygen and facilitate its diffusion within muscle tissues. Reversibly binds oxygen through a pentacoordinated heme iron and enables its timely and efficient release as needed during periods of heightened demand. Depending on the oxidative conditions of tissues and cells, and in addition to its ability to bind oxygen, it also has a nitrite reductase activity whereby it regulates the production of bioactive nitric oxide. Under stress conditions, like hypoxia and anoxia, it also protects cells against reactive oxygen species thanks to its pseudoperoxidase activity. This is Myoglobin (MB) from Graptemys geographica (Common map turtle).